The following is a 2800-amino-acid chain: Probable serine/threonine-protein kinase roco5 (2800 aa).

Residues 1-61 show a composition bias toward basic and acidic residues; the sequence is MEVIKKEKKD…EKEKDKEKDG (61 aa). Disordered stretches follow at residues 1–92, 123–225, and 417–437; these read MEVI…SAQS, TTTT…SPVD, and GINS…SSGI. Over residues 77-86 the composition is skewed to pro residues; the sequence is PTPPPPPPPS. 2 stretches are compositionally biased toward low complexity: residues 123 to 134 and 143 to 170; these read TTTTTTTTSSNN and NNNT…SSNN. The span at 176–190 shows a compositional bias: polar residues; the sequence is INVTSLDSGGNNNAS. Residues 194–218 are compositionally biased toward basic and acidic residues; sequence ISNEHSPKNRKEKEKEKDKDNKEDS. Positions 227 to 508 constitute a DH domain; that stretch reads NRRKLVEGFM…VQVVKDIVNE (282 aa). Over residues 417 to 429 the composition is skewed to low complexity; that stretch reads GINSANSNNNNNN. Positions 540–649 constitute a PH domain; that stretch reads KFLKEGILIE…WFQVLSQASL (110 aa). LRR repeat units lie at residues 777–800, 805–832, 834–856, and 861–885; these read NKSI…ALGD, NHSL…GILS, PSIT…HISK, and NQTL…IIDQ. Positions 926 to 946 are disordered; it reads KQLQVNQKSTTPSTSTSTTSS. Low complexity predominate over residues 934-946; the sequence is STTPSTSTSTTSS. LRR repeat units lie at residues 971–984, 985–1007, 1008–1031, 1033–1056, 1058–1077, 1078–1101, 1128–1151, 1152–1174, 1175–1197, and 1199–1222; these read LNKL…SRRI, SDLK…ILKE, LKNL…ISEM, ELKL…TLCK, NHLD…SLSQ, LVNL…IFTR, AIKA…IGSI, SSLI…IGKL, SSLQ…LSQL, and TLKV…KISI. One can recognise a Roc domain in the interval 1244–1464; sequence KEKPCMRMKL…NHIVKLGKAE (221 aa). Residues 1257–1264, 1348–1352, and 1407–1410 each bind GTP; these read GQENVGKT, DFAGQ, and THLD. The COR 1 domain maps to 1473-1604; it reads RSYFQLENLI…KFEIVHPLPD (132 aa). Disordered stretches follow at residues 1605–1665 and 1688–1711; these read PKAT…SLLN and DQST…FSDS. 3 stretches are compositionally biased toward low complexity: residues 1610–1645, 1653–1665, and 1688–1707; these read SSSS…SSTT, RTNS…SLLN, and DQST…SSNN. The COR 2 domain maps to 1717 to 1790; the sequence is KSSTKHLVPI…VKEFWKNGLL (74 aa). Residues 1886–2008 are compositionally biased toward low complexity; the sequence is SQQQHHQQQQ…LNPDSTSSSN (123 aa). Disordered stretches follow at residues 1886–2011 and 2050–2070; these read SQQQ…NETS and RNTN…SSIV. Polar residues predominate over residues 2050 to 2059; it reads RNTNKPKING. Positions 2175-2440 constitute a Protein kinase domain; that stretch reads LEIIEKVGEG…PTFIDIHSRL (266 aa). Residues 2181-2189 and K2202 each bind ATP; that span reads VGEGGFGIV. The Proton acceptor role is filled by D2300. 4 stretches are compositionally biased toward low complexity: residues 2452 to 2490, 2583 to 2654, 2669 to 2685, and 2694 to 2704; these read TTTN…GTTS, LKTP…SPIS, TTQT…PNPT, and SSLSSNSINKP. Disordered stretches follow at residues 2452 to 2498 and 2544 to 2800; these read TTTN…HPQL and AGGN…AIPK. Positions 2705 to 2723 are enriched in pro residues; sequence PSKPLPTPGGVTSPPPPPT. The span at 2730 to 2756 shows a compositional bias: polar residues; the sequence is IKFNSISAGNKTIGQSSTLPSSTLKQF. The segment covering 2757-2787 has biased composition (low complexity); that stretch reads TANNNTSPSGSSSLPNSTVSSPSSSFLLRPT.

It belongs to the protein kinase superfamily. TKL Ser/Thr protein kinase family. ROCO subfamily.

It catalyses the reaction L-seryl-[protein] + ATP = O-phospho-L-seryl-[protein] + ADP + H(+). It carries out the reaction L-threonyl-[protein] + ATP = O-phospho-L-threonyl-[protein] + ADP + H(+). Its function is as follows. May act as a serine/threonine-protein kinase and guanine-nucleotide releasing factor. The sequence is that of Probable serine/threonine-protein kinase roco5 (roco5) from Dictyostelium discoideum (Social amoeba).